The primary structure comprises 388 residues: Trichodiene synthase (388 aa).

Positions 109, 173, 234, 238, 242, and 248 each coordinate Mg(2+). The interval 109-113 (DDSRE) is aspartate-rich domain.

This sequence belongs to the trichodiene synthase family. It depends on Mg(2+) as a cofactor. Mn(2+) serves as cofactor.

The catalysed reaction is (2E,6E)-farnesyl diphosphate = trichodiene + diphosphate. The protein operates within sesquiterpene biosynthesis; trichothecene biosynthesis. In terms of biological role, trichodiene synthase; part of the gene cluster that mediates the production of the antimicrobial trichothecene harzianum A (HA) that plays a role in Botrytis cinerea antagonistic activity and plant defense priming. The biosynthesis of harzianum A begins with the cyclization of farnesyl diphosphate to trichodiene and is catalyzed by the trichodiene synthase TRI5. Trichodiene undergoes a series of oxygenations catalyzed by the cytochrome P450 monooxygenase TRI4. TRI4 controls the addition of 3 oxygens at C-2, C-11, and the C-12, C-13-epoxide to form the intermediate isotrichodiol. Isotrichodiol then undergoes a non-enzymatic isomerization and cyclization to form 12,13-epoxytrichothec-9-ene (EPT) which is further converted to trichodermol by the cytochrome P450 monooxygenase TRI11 via C-4 hydroxylation. The last step of HA synthesis is esterification of an octatriendioyl moiety to the C-4 oxygen of trichodermol. The octatriendioyl moiety is probably produced by the polyketide synthase TRI17 and the esterification performed by the trichothecene O-acetyltransferase TRI3. In Trichoderma arundinaceum, this protein is Trichodiene synthase.